The primary structure comprises 393 residues: DNA/RNA-binding protein KIN17 (393 aa).

The C2H2-type zinc-finger motif lies at 28–50 (CQMCQKQCRDENGFKCHCMSESH). Residues 51-160 (QRQLLLASEN…RQLELEKKKK (110 aa)) are winged helix-turn-helix (wHTH). N6,N6,N6-trimethyllysine; by METTL22; in vitro is present on K135. K135 bears the N6-methyllysine mark. A coiled-coil region spans residues 147–180 (ETIRRQLELEKKKKQDLDDEEKTAKFIEEQVRRG). Over residues 209-224 (KGACSSSGATSSKSST) the composition is skewed to low complexity. Residues 209-260 (KGACSSSGATSSKSSTLGPSALKTIGSSASVKRKESSQSSTQSKEKKKKKSA) are disordered. Residues 250–277 (QSKEKKKKKSALDEIMEIEEEKKRTART) are a coiled coil. Positions 284–334 (EIIVKIITKKLGEKYHKKKAIVKEVIDKYTAVVKMIDSGDKLKLDQTHLET) are C-terminal subdomain A. A C-terminal subdomain B region spans residues 340–391 (GKRILVLNGGYRGNEGTLESINEKTFSATIVIETGPLKGRRVEGIQYEDISK).

This sequence belongs to the KIN17 family. In terms of assembly, associated with DNA polymerase alpha, RFC1 and cyclin A, in multiprotein DNA replication complexes. Also associates with replication origins at the G1/S phase boundary and throughout the S phase in vivo. As to quaternary structure, (Microbial infection) Interacts with SV40 large T antigen. As to expression, ubiquitously expressed in all tissues examined, with highest levels in skeletal muscle, heart and testis. Differentially expressed in non-tumorigenic and tumorigenic cell lines. Highly expressed in proliferating epithelial keratinocyte cells in vitro (at protein level).

It is found in the nucleus. The protein resides in the cytoplasm. Functionally, involved in DNA replication and the cellular response to DNA damage. May participate in DNA replication factories and create a bridge between DNA replication and repair mediated by high molecular weight complexes. May play a role in illegitimate recombination and regulation of gene expression. May participate in mRNA processing. Binds, in vitro, to double-stranded DNA. Also shown to bind preferentially to curved DNA in vitro and in vivo. Binds via its C-terminal domain to RNA in vitro. The sequence is that of DNA/RNA-binding protein KIN17 from Homo sapiens (Human).